The sequence spans 74 residues: ATP synthase subunit 9, mitochondrial (74 aa).

The next 2 membrane-spanning stretches (helical) occupy residues 12 to 32 (LATIGLAGAGVGVGLVFAALI) and 50 to 70 (ILGFALTEAIGLFALMMAFLL).

It belongs to the ATPase C chain family. As to quaternary structure, F-type ATPases have 2 components, CF(1) - the catalytic core - and CF(0) - the membrane proton channel. CF(1) has five subunits: alpha(3), beta(3), gamma(1), delta(1), epsilon(1). CF(0) has three main subunits: a, b and c.

Its subcellular location is the mitochondrion membrane. Mitochondrial membrane ATP synthase (F(1)F(0) ATP synthase or Complex V) produces ATP from ADP in the presence of a proton gradient across the membrane which is generated by electron transport complexes of the respiratory chain. F-type ATPases consist of two structural domains, F(1) - containing the extramembraneous catalytic core and F(0) - containing the membrane proton channel, linked together by a central stalk and a peripheral stalk. During catalysis, ATP synthesis in the catalytic domain of F(1) is coupled via a rotary mechanism of the central stalk subunits to proton translocation. Part of the complex F(0) domain. A homomeric c-ring of probably 10 subunits is part of the complex rotary element. The protein is ATP synthase subunit 9, mitochondrial of Rhizopus oryzae (Mucormycosis agent).